The primary structure comprises 229 residues: Sugar fermentation stimulation protein homolog (229 aa).

This sequence belongs to the SfsA family.

In Clostridium novyi (strain NT), this protein is Sugar fermentation stimulation protein homolog.